The following is a 100-amino-acid chain: Toxin ParE3 (100 aa).

This sequence belongs to the RelE toxin family.

Toxic component of a type II toxin-antitoxin (TA) system. Its toxic effect is neutralized by coexpression with cognate antitoxin ParD3 but no other ParD or RelB antitoxin. This is Toxin ParE3 (parE3) from Caulobacter vibrioides (strain ATCC 19089 / CIP 103742 / CB 15) (Caulobacter crescentus).